Consider the following 554-residue polypeptide: Malate synthase 1 (554 aa).

Arginine 177 acts as the Proton acceptor in catalysis. The active-site Proton donor is the aspartate 457. The SKL peroxisome targeting motif signature appears at 552–554 (SKL).

The protein belongs to the malate synthase family. In terms of assembly, interacts with PEX9.

Its subcellular location is the peroxisome matrix. The catalysed reaction is glyoxylate + acetyl-CoA + H2O = (S)-malate + CoA + H(+). It functions in the pathway carbohydrate metabolism; glyoxylate cycle; (S)-malate from isocitrate: step 2/2. Functionally, malate synthase which takes part in the glyoxylate cycle. MLS1 activity is essential for cells to grow on oleic acid as a sole carbon source. Two steps of the glyoxylate cycle take place in the cytosol, the splitting of isocitrate into succinate and glyoxylate, and the dehydrogenation of malate to oxaloacetate. However, the formation of malate from glyoxylate and acetyl-CoA undertaken MLS1, occurs in the peroxisomes when cells are grown on oleic acid. The source of acetyl-CoA being either peroxisomal when breaking down fatty acids, or cytosolic when extra-cellular two-carbon substrates are used, therefore, although not strictly essential, the peroxisomal localization of MLS1 appears to be advantageous for cells growing on oleic acid, in that acetyl-CoA production and utilization are thereby intimately compartmentalized together to increase efficiency. This is Malate synthase 1 from Saccharomyces cerevisiae (strain YJM789) (Baker's yeast).